The primary structure comprises 527 residues: Probable protein kinase UbiB (527 aa).

Positions 118-501 (DFERVPVASA…QKRTNRLLQG (384 aa)) constitute a Protein kinase domain. ATP is bound by residues 124–132 (VASASIAQV) and lysine 150. Catalysis depends on aspartate 285, which acts as the Proton acceptor. The chain crosses the membrane as a helical span at residues 502–522 (LLMFGVAVGVGAVLARAWLAI).

This sequence belongs to the ABC1 family. UbiB subfamily.

The protein resides in the cell inner membrane. It functions in the pathway cofactor biosynthesis; ubiquinone biosynthesis [regulation]. In terms of biological role, is probably a protein kinase regulator of UbiI activity which is involved in aerobic coenzyme Q (ubiquinone) biosynthesis. This is Probable protein kinase UbiB from Paraburkholderia phymatum (strain DSM 17167 / CIP 108236 / LMG 21445 / STM815) (Burkholderia phymatum).